We begin with the raw amino-acid sequence, 412 residues long: NADH-quinone oxidoreductase subunit D (412 aa).

It belongs to the complex I 49 kDa subunit family. In terms of assembly, NDH-1 is composed of at least 14 different subunits, Nqo1 to Nqo14. The complex has a L-shaped structure, with the hydrophobic arm (subunits Nqo7, Nqo8, Nqo10 to Nqo14) embedded in the inner membrane and the hydrophilic peripheral arm (subunits Nqo1 to Nqo6, Nqo9) protruding into the bacterial cytoplasm. The hydrophilic domain contains all the redox centers. NADH-quinone oxidoreductase forms a supercomplex with ubiquinol-cytochrome c reductase complex (complex III or cytochrome b-c1 complex) and cytochrome c oxidase (complex IV), which stabilizes the NADH-quinone oxidoreductase complex.

The protein resides in the cell inner membrane. It carries out the reaction a quinone + NADH + 5 H(+)(in) = a quinol + NAD(+) + 4 H(+)(out). In terms of biological role, NDH-1 shuttles electrons from NADH, via FMN and iron-sulfur (Fe-S) centers, to quinones in the respiratory chain. The immediate electron acceptor for the enzyme in this species is believed to be ubiquinone. Couples the redox reaction to proton translocation (for every two electrons transferred, four hydrogen ions are translocated across the cytoplasmic membrane), and thus conserves the redox energy in a proton gradient. The sequence is that of NADH-quinone oxidoreductase subunit D (nuoD) from Paracoccus denitrificans (strain Pd 1222).